The primary structure comprises 140 residues: Resuscitation-promoting factor RpfC (140 aa).

The signal sequence occupies residues 1–31 (MTRIAKPLIKSAMAAGLVTASMSLSTAVAHA).

This sequence belongs to the transglycosylase family. Rpf subfamily.

It localises to the secreted. In terms of biological role, factor that stimulates resuscitation of dormant cells. Has peptidoglycan (PG) hydrolytic activity. The polypeptide is Resuscitation-promoting factor RpfC (rpfC) (Mycobacterium tuberculosis (strain ATCC 35801 / TMC 107 / Erdman)).